The primary structure comprises 236 residues: Small ribosomal subunit protein uS3 (236 aa).

The KH type-2 domain maps to 38 to 106 (LRRYLHTRLK…DIQINISEIK (69 aa)). Residues 211-236 (DLSPNVQAQQRKMKESPQQRRQRRGG) form a disordered region.

The protein belongs to the universal ribosomal protein uS3 family. In terms of assembly, part of the 30S ribosomal subunit. Forms a tight complex with proteins S10 and S14.

Binds the lower part of the 30S subunit head. Binds mRNA in the 70S ribosome, positioning it for translation. In Salinibacter ruber (strain DSM 13855 / M31), this protein is Small ribosomal subunit protein uS3.